Consider the following 335-residue polypeptide: Cell division protein ZipA (335 aa).

Topologically, residues 1 to 4 (MDLN) are periplasmic. A helical transmembrane segment spans residues 5-25 (AILIILGVIALIILVAHGIWS). Residues 26–335 (NRREKSQYFE…AERDYLARVS (310 aa)) lie on the Cytoplasmic side of the membrane.

Belongs to the ZipA family. In terms of assembly, interacts with FtsZ via their C-terminal domains.

It is found in the cell inner membrane. Its function is as follows. Essential cell division protein that stabilizes the FtsZ protofilaments by cross-linking them and that serves as a cytoplasmic membrane anchor for the Z ring. Also required for the recruitment to the septal ring of downstream cell division proteins. The sequence is that of Cell division protein ZipA from Histophilus somni (strain 2336) (Haemophilus somnus).